Consider the following 67-residue polypeptide: MKTQTALFSFFLVLLLVATQTEGGILDAITGLLGKRALRNQNFVDYAFDPSLSAADWRALETLLEEY.

Residues 1–23 form the signal peptide; the sequence is MKTQTALFSFFLVLLLVATQTEG. Leucine 33 carries the post-translational modification Leucine amide. Residues 37-67 constitute a propeptide that is removed on maturation; the sequence is ALRNQNFVDYAFDPSLSAADWRALETLLEEY.

Belongs to the non-disulfide-bridged peptide (NDBP) superfamily. Short antimicrobial peptide (group 4) family. As to expression, expressed by the venom gland.

Its subcellular location is the secreted. Its function is as follows. Antimicrobial peptide. This is Peptide Ctry2606 from Chaerilus tryznai (Scorpion).